Consider the following 347-residue polypeptide: NADH-quinone oxidoreductase subunit H 1 (347 aa).

A run of 9 helical transmembrane segments spans residues I14–L34, P50–F70, I83–P103, V115–G135, I161–V181, F198–L218, A258–V278, V286–V306, and L321–L341.

It belongs to the complex I subunit 1 family. NDH-1 is composed of 14 different subunits. Subunits NuoA, H, J, K, L, M, N constitute the membrane sector of the complex.

It is found in the cell inner membrane. The enzyme catalyses a quinone + NADH + 5 H(+)(in) = a quinol + NAD(+) + 4 H(+)(out). Its function is as follows. NDH-1 shuttles electrons from NADH, via FMN and iron-sulfur (Fe-S) centers, to quinones in the respiratory chain. The immediate electron acceptor for the enzyme in this species is believed to be ubiquinone. Couples the redox reaction to proton translocation (for every two electrons transferred, four hydrogen ions are translocated across the cytoplasmic membrane), and thus conserves the redox energy in a proton gradient. This subunit may bind ubiquinone. This is NADH-quinone oxidoreductase subunit H 1 from Rhizobium meliloti (strain 1021) (Ensifer meliloti).